Reading from the N-terminus, the 147-residue chain is Large ribosomal subunit protein uL15 (147 aa).

The span at 1-15 (MKLHELKPAKGAVKE) shows a compositional bias: basic and acidic residues. The tract at residues 1–47 (MKLHELKPAKGAVKEVKRKGRGRATGNGKTAGRGHNGQNSRSGGGVR) is disordered. The segment covering 23–35 (RATGNGKTAGRGH) has biased composition (gly residues).

The protein belongs to the universal ribosomal protein uL15 family. As to quaternary structure, part of the 50S ribosomal subunit.

Its function is as follows. Binds to the 23S rRNA. The polypeptide is Large ribosomal subunit protein uL15 (Alkaliphilus metalliredigens (strain QYMF)).